Reading from the N-terminus, the 164-residue chain is MAKKKKKVDENNSVLATNRKARHDYHIIDTWEAGVVLLGTEIKSLREGKVSLVDSFATIDNGEIWLQHLHIPQYSMGSWTNHTPKRTRKLLLHRNEIDSLMGKVRDGNRTLVPLKLYLKNGRVKLELGLAQGKQDYDKRQDIKRRTEEREVTRELGRRIKGINA.

It belongs to the SmpB family.

Its subcellular location is the cytoplasm. Functionally, required for rescue of stalled ribosomes mediated by trans-translation. Binds to transfer-messenger RNA (tmRNA), required for stable association of tmRNA with ribosomes. tmRNA and SmpB together mimic tRNA shape, replacing the anticodon stem-loop with SmpB. tmRNA is encoded by the ssrA gene; the 2 termini fold to resemble tRNA(Ala) and it encodes a 'tag peptide', a short internal open reading frame. During trans-translation Ala-aminoacylated tmRNA acts like a tRNA, entering the A-site of stalled ribosomes, displacing the stalled mRNA. The ribosome then switches to translate the ORF on the tmRNA; the nascent peptide is terminated with the 'tag peptide' encoded by the tmRNA and targeted for degradation. The ribosome is freed to recommence translation, which seems to be the essential function of trans-translation. The protein is SsrA-binding protein of Corynebacterium glutamicum (strain R).